The primary structure comprises 277 residues: Large ribosomal subunit protein uL2 (277 aa).

Disordered regions lie at residues 37-60 (KNSTAGRNNNGHITTRHKGGGHKH) and 223-265 (VVMN…KRTD). The span at 39–49 (STAGRNNNGHI) shows a compositional bias: polar residues. Positions 50 to 60 (TTRHKGGGHKH) are enriched in basic residues. Basic and acidic residues predominate over residues 229 to 244 (DHPHGGGEGRTGEARE).

It belongs to the universal ribosomal protein uL2 family. Part of the 50S ribosomal subunit. Forms a bridge to the 30S subunit in the 70S ribosome.

One of the primary rRNA binding proteins. Required for association of the 30S and 50S subunits to form the 70S ribosome, for tRNA binding and peptide bond formation. It has been suggested to have peptidyltransferase activity; this is somewhat controversial. Makes several contacts with the 16S rRNA in the 70S ribosome. This Neisseria meningitidis serogroup A / serotype 4A (strain DSM 15465 / Z2491) protein is Large ribosomal subunit protein uL2.